The chain runs to 468 residues: Monocarboxylate transporter 6 (468 aa).

The Cytoplasmic portion of the chain corresponds to 1-13 (MARALEQADGRWA). Residues 14 to 34 (WVVLLSSLVTQALTLGFPTCI) traverse the membrane as a helical segment. At 35–53 (GVFFTDLQRDFQASNSETS) the chain is on the extracellular side. The helical transmembrane segment at 54 to 74 (WFPSILGAMVHGGGPLCSILV) threads the bilayer. The Cytoplasmic segment spans residues 75–80 (KHFGCR). The chain crosses the membrane as a helical span at residues 81–101 (VTMMLGGVLASLGMVVSTFSG). Ser102 is a topological domain (extracellular). A helical transmembrane segment spans residues 103–122 (LTHLFLTAGVITGLGMCFSF). Over 123–138 (QSSITVVGLYFVRRRP) the chain is Cytoplasmic. Residues 139–159 (LANALASMGLSMGVTLWPLLA) traverse the membrane as a helical segment. The Extracellular portion of the chain corresponds to 160-171 (RYLLETLGWRGA). A helical membrane pass occupies residues 172–192 (FLIFGGILLHCCVCGALLRPV). At 193–239 (ATNEVPEPKEDPLLPPKIPTRSCLATCVSTIRYHLAFDILRHNMGFC) the chain is on the cytoplasmic side. Residues 240-260 (IYVTGVTWMNLGFALPHIFLV) form a helical membrane-spanning segment. Over 261–274 (PYAMHHGVDDYWAA) the chain is Extracellular. A helical membrane pass occupies residues 275 to 295 (MLMSIVGFCNIFLRPMAGLLL). The Cytoplasmic portion of the chain corresponds to 296-306 (AGRKSLAAYRK). The chain crosses the membrane as a helical span at residues 307 to 327 (YLFAVAILINGLTNLICTVSA). Topologically, residues 328 to 330 (DFR) are extracellular. Residues 331–351 (VLLGYCLVYSLSMCGVGILVF) traverse the membrane as a helical segment. Topologically, residues 352–368 (QVLMDIVPMDRFPSALG) are cytoplasmic. The chain crosses the membrane as a helical span at residues 369–389 (LFTILCGVTSLISPPLAGLLL). The Extracellular portion of the chain corresponds to 390 to 396 (DKTNNFS). Residues 397-417 (YVFYMSSGFLVSGSLILGVGF) traverse the membrane as a helical segment. At 418–468 (YAAEKKKLKQDGQAKMENATSEMTPMHDLTSEDKDSAKKQPYPESIYMTNV) the chain is on the cytoplasmic side. Positions 429 to 468 (GQAKMENATSEMTPMHDLTSEDKDSAKKQPYPESIYMTNV) are disordered. The span at 446-455 (LTSEDKDSAK) shows a compositional bias: basic and acidic residues.

It belongs to the major facilitator superfamily. Monocarboxylate porter (TC 2.A.1.13) family.

The protein resides in the cell membrane. In terms of biological role, proton-linked monocarboxylate transporter. Catalyzes the rapid transport across the plasma membrane of many monocarboxylates such as lactate, pyruvate, branched-chain oxo acids derived from leucine, valine and isoleucine, and the ketone bodies acetoacetate, beta-hydroxybutyrate and acetate. This is Monocarboxylate transporter 6 (Slc16a5) from Mus musculus (Mouse).